The following is a 133-amino-acid chain: Large ribosomal subunit protein bL20 (133 aa).

Belongs to the bacterial ribosomal protein bL20 family.

Functionally, binds directly to 23S ribosomal RNA and is necessary for the in vitro assembly process of the 50S ribosomal subunit. It is not involved in the protein synthesizing functions of that subunit. The polypeptide is Large ribosomal subunit protein bL20 (Mesorhizobium japonicum (strain LMG 29417 / CECT 9101 / MAFF 303099) (Mesorhizobium loti (strain MAFF 303099))).